A 371-amino-acid polypeptide reads, in one-letter code: Peptide chain release factor 2 (371 aa).

Position 250 is an N5-methylglutamine (Gln250).

Belongs to the prokaryotic/mitochondrial release factor family. In terms of processing, methylated by PrmC. Methylation increases the termination efficiency of RF2.

It is found in the cytoplasm. Peptide chain release factor 2 directs the termination of translation in response to the peptide chain termination codons UGA and UAA. The sequence is that of Peptide chain release factor 2 from Paramagnetospirillum magneticum (strain ATCC 700264 / AMB-1) (Magnetospirillum magneticum).